A 276-amino-acid polypeptide reads, in one-letter code: Diaminopimelate epimerase (276 aa).

Substrate contacts are provided by Asn13, Gln46, and Asn66. The Proton donor role is filled by Cys75. Residues 76-77 (GN), Asn159, Asn192, and 210-211 (ER) each bind substrate. Catalysis depends on Cys219, which acts as the Proton acceptor. 220-221 (GT) contacts substrate.

The protein belongs to the diaminopimelate epimerase family. Homodimer.

The protein localises to the cytoplasm. It catalyses the reaction (2S,6S)-2,6-diaminopimelate = meso-2,6-diaminopimelate. The protein operates within amino-acid biosynthesis; L-lysine biosynthesis via DAP pathway; DL-2,6-diaminopimelate from LL-2,6-diaminopimelate: step 1/1. Functionally, catalyzes the stereoinversion of LL-2,6-diaminopimelate (L,L-DAP) to meso-diaminopimelate (meso-DAP), a precursor of L-lysine and an essential component of the bacterial peptidoglycan. The polypeptide is Diaminopimelate epimerase (Pseudomonas syringae pv. tomato (strain ATCC BAA-871 / DC3000)).